The primary structure comprises 471 residues: Steroid C26-monooxygenase (471 aa).

Residue G238 coordinates substrate. C412 lines the heme pocket.

It belongs to the cytochrome P450 family. It depends on heme as a cofactor.

The enzyme catalyses cholest-4-en-3-one + 6 reduced [2Fe-2S]-[ferredoxin] + 3 O2 + 5 H(+) = (25S)-3-oxocholest-4-en-26-oate + 6 oxidized [2Fe-2S]-[ferredoxin] + 4 H2O. Functionally, involved in the utilization of cholesterol as the sole carbon and energy source by degrading the side chain. Primarily catalyzes the sequential oxidation of the terminal methyl of cholest-4-en-3-one into (25S)-26-hydroxycholest-4-en-3-one (alcohol), (25S)-26-oxocholest-4-en-3-one (aldehyde), to finally yield the carboxylic acid (25S)-3-oxocholest-4-en-26-oate. Also able to sequentially oxidize cholesterol itself, not only cholest-4-en-3-one. The chain is Steroid C26-monooxygenase (cyp125) from Rhodococcus jostii (strain RHA1).